The chain runs to 621 residues: Putative 5'-3' exonuclease R528 (621 aa).

It belongs to the 5'-3' exonuclease family.

It localises to the virion. The protein is Putative 5'-3' exonuclease R528 of Acanthamoeba polyphaga mimivirus (APMV).